The following is a 461-amino-acid chain: MLKIFNTLTRQKEEFKPIHAGEVGMYVCGITVYDLCHIGHGRTFVAFDVVARYLRFLGYKLKYVRNITDIDDKIIKRANENGESFVALVDRMIAEMHQDFDALNILRPDSEPRATHHIQEIIEITRTLIEKGHAYVADNGDVMFDVPTDPTYGQLSRQDLEQLQAGARVDVVDVKRNPMDFVLWKMSKEGEPSWPSPWGEGRPGWHIECSAMNCKQLGNHFDIHGGGSDLMFPHHENEIAQSTCAHDGEYVNYWMHSGMVMVDREKMSKSLGNFFTVRDVLKYYDAETVRYFLMSGHYRSQLNYSEENLKQARASLERLYTALRGTDKSAAPAGGEAFEARFVEAMNDDFNTPEAYSVLFDMAREVNRLKSEDMTAANAMASHLRKISGVLGLLEQEPDAFLQSGAQADDGEVAEIEALIQQRLDARKAKDWAAADAARDRLTEMGIILEDGPQGTTWRRK.

Position 28 (C28) interacts with Zn(2+). Residues 30 to 40 (ITVYDLCHIGH) carry the 'HIGH' region motif. Zn(2+) is bound by residues C209, H234, and E238. A 'KMSKS' region motif is present at residues 266 to 270 (KMSKS). K269 serves as a coordination point for ATP.

Belongs to the class-I aminoacyl-tRNA synthetase family. Monomer. Zn(2+) serves as cofactor.

It localises to the cytoplasm. The catalysed reaction is tRNA(Cys) + L-cysteine + ATP = L-cysteinyl-tRNA(Cys) + AMP + diphosphate. The polypeptide is Cysteine--tRNA ligase (Salmonella arizonae (strain ATCC BAA-731 / CDC346-86 / RSK2980)).